We begin with the raw amino-acid sequence, 76 residues long: Small ribosomal subunit protein bS18 (76 aa).

The protein belongs to the bacterial ribosomal protein bS18 family. As to quaternary structure, part of the 30S ribosomal subunit. Forms a tight heterodimer with protein bS6.

Binds as a heterodimer with protein bS6 to the central domain of the 16S rRNA, where it helps stabilize the platform of the 30S subunit. The chain is Small ribosomal subunit protein bS18 from Azotobacter vinelandii (strain DJ / ATCC BAA-1303).